The following is a 669-amino-acid chain: DNA mismatch repair protein MutL (669 aa).

A disordered region spans residues 356–382 (FEQRQNTENNQEKTFSSEESNSKPFME). The segment covering 361–378 (NTENNQEKTFSSEESNSK) has biased composition (polar residues).

The protein belongs to the DNA mismatch repair MutL/HexB family.

This protein is involved in the repair of mismatches in DNA. It is required for dam-dependent methyl-directed DNA mismatch repair. May act as a 'molecular matchmaker', a protein that promotes the formation of a stable complex between two or more DNA-binding proteins in an ATP-dependent manner without itself being part of a final effector complex. The protein is DNA mismatch repair protein MutL of Staphylococcus aureus (strain USA300).